A 314-amino-acid polypeptide reads, in one-letter code: 4-hydroxy-3-methylbut-2-enyl diphosphate reductase (314 aa).

A [4Fe-4S] cluster-binding site is contributed by cysteine 12. Residues histidine 41 and histidine 74 each contribute to the (2E)-4-hydroxy-3-methylbut-2-enyl diphosphate site. Residues histidine 41 and histidine 74 each coordinate dimethylallyl diphosphate. Residues histidine 41 and histidine 74 each coordinate isopentenyl diphosphate. Cysteine 96 contributes to the [4Fe-4S] cluster binding site. Histidine 124 lines the (2E)-4-hydroxy-3-methylbut-2-enyl diphosphate pocket. Residue histidine 124 participates in dimethylallyl diphosphate binding. Residue histidine 124 participates in isopentenyl diphosphate binding. Residue glutamate 126 is the Proton donor of the active site. Threonine 167 is a (2E)-4-hydroxy-3-methylbut-2-enyl diphosphate binding site. Cysteine 197 contacts [4Fe-4S] cluster. Serine 225, serine 226, asparagine 227, and serine 269 together coordinate (2E)-4-hydroxy-3-methylbut-2-enyl diphosphate. Dimethylallyl diphosphate is bound by residues serine 225, serine 226, asparagine 227, and serine 269. Residues serine 225, serine 226, asparagine 227, and serine 269 each contribute to the isopentenyl diphosphate site.

This sequence belongs to the IspH family. It depends on [4Fe-4S] cluster as a cofactor.

The catalysed reaction is isopentenyl diphosphate + 2 oxidized [2Fe-2S]-[ferredoxin] + H2O = (2E)-4-hydroxy-3-methylbut-2-enyl diphosphate + 2 reduced [2Fe-2S]-[ferredoxin] + 2 H(+). It carries out the reaction dimethylallyl diphosphate + 2 oxidized [2Fe-2S]-[ferredoxin] + H2O = (2E)-4-hydroxy-3-methylbut-2-enyl diphosphate + 2 reduced [2Fe-2S]-[ferredoxin] + 2 H(+). It functions in the pathway isoprenoid biosynthesis; dimethylallyl diphosphate biosynthesis; dimethylallyl diphosphate from (2E)-4-hydroxy-3-methylbutenyl diphosphate: step 1/1. Its pathway is isoprenoid biosynthesis; isopentenyl diphosphate biosynthesis via DXP pathway; isopentenyl diphosphate from 1-deoxy-D-xylulose 5-phosphate: step 6/6. Catalyzes the conversion of 1-hydroxy-2-methyl-2-(E)-butenyl 4-diphosphate (HMBPP) into a mixture of isopentenyl diphosphate (IPP) and dimethylallyl diphosphate (DMAPP). Acts in the terminal step of the DOXP/MEP pathway for isoprenoid precursor biosynthesis. The protein is 4-hydroxy-3-methylbut-2-enyl diphosphate reductase of Haemophilus influenzae (strain PittGG).